A 195-amino-acid chain; its full sequence is Imidazoleglycerol-phosphate dehydratase (195 aa).

This sequence belongs to the imidazoleglycerol-phosphate dehydratase family.

The protein resides in the cytoplasm. It carries out the reaction D-erythro-1-(imidazol-4-yl)glycerol 3-phosphate = 3-(imidazol-4-yl)-2-oxopropyl phosphate + H2O. The protein operates within amino-acid biosynthesis; L-histidine biosynthesis; L-histidine from 5-phospho-alpha-D-ribose 1-diphosphate: step 6/9. This Desulfosudis oleivorans (strain DSM 6200 / JCM 39069 / Hxd3) (Desulfococcus oleovorans) protein is Imidazoleglycerol-phosphate dehydratase.